Consider the following 550-residue polypeptide: Putative pentatricopeptide repeat-containing protein At5g37570 (550 aa).

12 PPR repeats span residues 73–107 (GTYLWNHLIKGYSNKFLFFETVSILMRMMRTGLAR), 109–143 (DEYTFPLVMKVCSNNGQVRVGSSVHGLVLRIGFDK), 144–174 (DVVVGTSFVDFYGKCKDLFSARKVFGEMPER), 175–205 (NAVSWTALVVAYVKSGELEEAKSMFDLMPER), 206–240 (NLGSWNALVDGLVKSGDLVNAKKLFDEMPKRDIIS), 241–267 (YTSMIDGYAKGGDMVSARDLFEEARGV), 268–302 (DVRAWSALILGYAQNGQPNEAFKVFSEMCAKNVKP), 303–333 (DEFIMVGLMSACSQMGCFELCEKVDSYLHQR), 339–369 (SHYVVPALIDMNAKCGHMDRAAKLFEEMPQR), 370–404 (DLVSYCSMMEGMAIHGCGSEAIRLFEKMVDEGIVP), 405–435 (DEVAFTVILKVCGQSRLVEEGLRYFELMRKK), and 441–475 (SPDHYSCIVNLLSRTGKLKEAYELIKSMPFEAHAS). The segment at 476-550 (AWGSLLGGCS…KICGRSWISR (75 aa)) is type E motif.

The protein belongs to the PPR family. PCMP-E subfamily.

The chain is Putative pentatricopeptide repeat-containing protein At5g37570 (PCMP-E37) from Arabidopsis thaliana (Mouse-ear cress).